We begin with the raw amino-acid sequence, 568 residues long: Putative ABC transporter ATP-binding protein EF_2153 (568 aa).

2 consecutive ABC transporter domains span residues 6–247 (ITFN…GIRE) and 301–535 (LRLE…ASLK). ATP-binding positions include 40–47 (GPSGSGKS) and 335–342 (GKNGAGKS).

The protein belongs to the ABC transporter superfamily.

Its subcellular location is the cell membrane. Probably part of an ABC transporter complex. Responsible for energy coupling to the transport system. The sequence is that of Putative ABC transporter ATP-binding protein EF_2153 from Enterococcus faecalis (strain ATCC 700802 / V583).